The following is a 251-amino-acid chain: Haloacid dehalogenase-like hydrolase domain-containing protein 3 (251 aa).

At Lys-15 the chain carries N6-acetyllysine; alternate. Position 15 is an N6-succinyllysine; alternate (Lys-15). Lys-130 carries the N6-acetyllysine modification.

Belongs to the HAD-like hydrolase superfamily.

This chain is Haloacid dehalogenase-like hydrolase domain-containing protein 3 (HDHD3), found in Bos taurus (Bovine).